Here is a 229-residue protein sequence, read N- to C-terminus: Ribosomal RNA small subunit methyltransferase G (229 aa).

Residues glycine 87, leucine 92, 138 to 139 (VE), and arginine 154 contribute to the S-adenosyl-L-methionine site.

Belongs to the methyltransferase superfamily. RNA methyltransferase RsmG family.

The protein resides in the cytoplasm. The enzyme catalyses guanosine(527) in 16S rRNA + S-adenosyl-L-methionine = N(7)-methylguanosine(527) in 16S rRNA + S-adenosyl-L-homocysteine. Specifically methylates the N7 position of guanine in position 527 of 16S rRNA. The polypeptide is Ribosomal RNA small subunit methyltransferase G (Oleidesulfovibrio alaskensis (strain ATCC BAA-1058 / DSM 17464 / G20) (Desulfovibrio alaskensis)).